A 487-amino-acid chain; its full sequence is Phenylalanine--tRNA ligase alpha subunit (487 aa).

L-phenylalanine is bound by residues threonine 319, 361 to 363 (QVE), and tyrosine 401. Glutamate 403 serves as a coordination point for Mg(2+). Phenylalanine 427 is an L-phenylalanine binding site.

This sequence belongs to the class-II aminoacyl-tRNA synthetase family. Phe-tRNA synthetase alpha subunit type 2 subfamily. Tetramer of two alpha and two beta subunits. Mg(2+) is required as a cofactor.

It localises to the cytoplasm. The catalysed reaction is tRNA(Phe) + L-phenylalanine + ATP = L-phenylalanyl-tRNA(Phe) + AMP + diphosphate + H(+). The protein is Phenylalanine--tRNA ligase alpha subunit (phesA) of Dictyostelium discoideum (Social amoeba).